The chain runs to 212 residues: tRNA (guanine-N(7)-)-methyltransferase (212 aa).

The S-adenosyl-L-methionine site is built by glutamate 44, aspartate 69, aspartate 96, and aspartate 118. Aspartate 118 is an active-site residue. Lysine 122 contributes to the substrate binding site. The interaction with RNA stretch occupies residues 124–129 (RHEKRR). Residues aspartate 154 and 191–194 (TEYE) each bind substrate.

This sequence belongs to the class I-like SAM-binding methyltransferase superfamily. TrmB family.

It catalyses the reaction guanosine(46) in tRNA + S-adenosyl-L-methionine = N(7)-methylguanosine(46) in tRNA + S-adenosyl-L-homocysteine. Its pathway is tRNA modification; N(7)-methylguanine-tRNA biosynthesis. In terms of biological role, catalyzes the formation of N(7)-methylguanine at position 46 (m7G46) in tRNA. The protein is tRNA (guanine-N(7)-)-methyltransferase of Streptococcus gordonii (strain Challis / ATCC 35105 / BCRC 15272 / CH1 / DL1 / V288).